We begin with the raw amino-acid sequence, 334 residues long: Serine/Arginine-related protein 53 (334 aa).

The segment covering 1 to 13 (MGRRSSDTEEESR) has biased composition (basic and acidic residues). Disordered regions lie at residues 1-173 (MGRR…IKAG), 201-222 (LKAK…QATL), and 241-290 (VQQT…SIPT). The segment covering 14 to 24 (SKRKKKHRRRS) has biased composition (basic residues). Basic and acidic residues predominate over residues 44 to 62 (PRSESRSWSRDRQPRSHSY). Over residues 78–118 (SRRKRSRSRSRGRGKSYRVQRSRSKSRTRRSRSRPRPRSHS) the composition is skewed to basic residues. 3 stretches are compositionally biased toward basic and acidic residues: residues 132–166 (RSRD…KRGD), 201–218 (LKAK…KEED), and 247–262 (SSKD…EVKH). The stretch at 180 to 234 (AEQAKARLQLVLEAAAKADEALKAKERNEEEAKRRKEEDQATLGEQVKRVKEIEA) forms a coiled coil.

As to quaternary structure, interacts (via Arg/Ser-rich domain) with LUC7L3, RBM39 and RSF1. Post-translationally, phosphorylated.

Its subcellular location is the nucleus speckle. It localises to the nucleus. It is found in the cytoplasm. In terms of biological role, plays a role in pre-mRNA splicing. Involved in both constitutive and alternative pre-mRNA splicing. May have a role in the recognition of the 3' splice site during the second step of splicing. This chain is Serine/Arginine-related protein 53 (Rsrc1), found in Rattus norvegicus (Rat).